We begin with the raw amino-acid sequence, 387 residues long: Lipid-A-disaccharide synthase (387 aa).

This sequence belongs to the LpxB family.

The catalysed reaction is a lipid X + a UDP-2-N,3-O-bis[(3R)-3-hydroxyacyl]-alpha-D-glucosamine = a lipid A disaccharide + UDP + H(+). It functions in the pathway bacterial outer membrane biogenesis; LPS lipid A biosynthesis. Its function is as follows. Condensation of UDP-2,3-diacylglucosamine and 2,3-diacylglucosamine-1-phosphate to form lipid A disaccharide, a precursor of lipid A, a phosphorylated glycolipid that anchors the lipopolysaccharide to the outer membrane of the cell. The sequence is that of Lipid-A-disaccharide synthase from Nitrosococcus oceani (strain ATCC 19707 / BCRC 17464 / JCM 30415 / NCIMB 11848 / C-107).